The sequence spans 642 residues: Zinc finger protein 14 (642 aa).

One can recognise a KRAB domain in the interval 4–76; sequence VSFEDVAVNF…MVERLCESRR (73 aa). A C2H2-type 1 zinc finger spans residues 103 to 125; it reads HECSFCGRDFIHHSSLNRHMRSH. A C2H2-type 2; degenerate zinc finger spans residues 141–163; sequence CKCKAVGKTFSYHHCFRKHERTH. The C2H2-type 3 zinc finger occupies 169–191; it reads YECKQCGKAFIYYQPFQRHERTH. A C2H2-type 4; atypical zinc finger spans residues 197-217; the sequence is YECKQCGKTFIYYQSFQKHAH. 15 C2H2-type zinc fingers span residues 223 to 245, 251 to 273, 279 to 301, 307 to 329, 335 to 357, 363 to 385, 391 to 413, 419 to 441, 447 to 469, 475 to 497, 503 to 525, 531 to 553, 559 to 581, 587 to 609, and 615 to 637; these read YECK…KRTH, YECK…ERTH, YKCK…KRTH, YECK…VIIH, YKCK…ERTH, YECK…ETTH, YECK…ERSH, YECK…EKIH, FECK…ERTH, YQCK…ERTH, and YRCK…ERSH.

Belongs to the krueppel C2H2-type zinc-finger protein family.

It localises to the nucleus. Its function is as follows. May be involved in transcriptional regulation. This Homo sapiens (Human) protein is Zinc finger protein 14 (ZNF14).